Here is a 314-residue protein sequence, read N- to C-terminus: Deoxymugineic acid synthase 1-B (314 aa).

The interval 1–22 (MGAGDKTAAGMPRIGMGTAVQG) is disordered. NADP(+) is bound at residue aspartate 44. Tyrosine 49 acts as the Proton donor in catalysis. Histidine 112 provides a ligand contact to substrate. NADP(+) is bound by residues 158–159 (AN), glutamine 180, 258–266 (FDEARMREN), and 273–281 (ELTEEERRR).

This sequence belongs to the aldo/keto reductase family. Mostly expressed in root tissues, observed in mesocotyl and embryonic roots, seedling roots, crown and seedling leafes, mature bracts, anthers, pistil, caryopsis and embryos.

It catalyses the reaction 2'-deoxymugineate + NAD(+) = 3''-deamino-3''-oxonicotianamine + NADH + H(+). The catalysed reaction is 2'-deoxymugineate + NADP(+) = 3''-deamino-3''-oxonicotianamine + NADPH + H(+). Its pathway is siderophore biosynthesis. Its function is as follows. Catalyzes the reduction of a 3''-keto intermediate during the biosynthesis of 2'-deoxymugineic acid (DMA) from L-Met. Involved in the formation of phytosiderophores (MAs) belonging to the mugineic acid family and required to acquire iron. The protein is Deoxymugineic acid synthase 1-B of Triticum aestivum (Wheat).